We begin with the raw amino-acid sequence, 302 residues long: Recombination-associated protein RdgC (302 aa).

This sequence belongs to the RdgC family.

The protein localises to the cytoplasm. Its subcellular location is the nucleoid. Functionally, may be involved in recombination. The polypeptide is Recombination-associated protein RdgC (Xylella fastidiosa (strain M23)).